The sequence spans 129 residues: UPF0102 protein CPS_4433 (129 aa).

The protein belongs to the UPF0102 family.

This Colwellia psychrerythraea (strain 34H / ATCC BAA-681) (Vibrio psychroerythus) protein is UPF0102 protein CPS_4433.